The chain runs to 437 residues: Elongation factor Tu, mitochondrial (437 aa).

The N-terminal 38 residues, 1 to 38 (MSALLPRLLTRTAFKASGKLLRLSSVISRTFSQTTTSY), are a transit peptide targeting the mitochondrion. One can recognise a tr-type G domain in the interval 46-242 (KPHVNIGTIG…AVDEYIPTPE (197 aa)). The G1 stretch occupies residues 55 to 62 (GHVDHGKT). GTP is bound at residue 55–62 (GHVDHGKT). The G2 stretch occupies residues 96-100 (GITIS). The G3 stretch occupies residues 117 to 120 (DCPG). GTP is bound by residues 117-121 (DCPGH) and 172-175 (NKVD). A G4 region spans residues 172–175 (NKVD). Residues 210–212 (SAL) are G5.

The protein belongs to the TRAFAC class translation factor GTPase superfamily. Classic translation factor GTPase family. EF-Tu/EF-1A subfamily. Post-translationally, the precursor is processed in two steps involving mitochondrial intermediate peptidase (MIP) and mitochondrial processing peptidase (MPP).

The protein resides in the mitochondrion. It functions in the pathway protein biosynthesis; polypeptide chain elongation. G-protein that, in its active GTP-bound form, binds to and delivers aminoacyl-tRNA to the A-site of ribosomes during protein biosynthesis. In the presence of a correct codon-anticodon match between the aminoacyl-tRNA and the A-site codon of the ribosome-bound mRNA, the ribosome acts as a GTPase activator and the GTP is hydrolyzed. The inactive GDP-bound form leaves the ribosome and must be recycled before binding another molecule of aminoacyl-tRNA. Required for mitochondrial protein biosynthesis and maintenance of mitochondrial DNA. The chain is Elongation factor Tu, mitochondrial (TUF1) from Saccharomyces cerevisiae (strain ATCC 204508 / S288c) (Baker's yeast).